The sequence spans 152 residues: Large ribosomal subunit protein bL9 (152 aa).

The protein belongs to the bacterial ribosomal protein bL9 family.

In terms of biological role, binds to the 23S rRNA. In Thermosynechococcus vestitus (strain NIES-2133 / IAM M-273 / BP-1), this protein is Large ribosomal subunit protein bL9.